A 124-amino-acid polypeptide reads, in one-letter code: Holo-[acyl-carrier-protein] synthase (124 aa).

Residues aspartate 8 and glutamate 58 each contribute to the Mg(2+) site.

Belongs to the P-Pant transferase superfamily. AcpS family. Requires Mg(2+) as cofactor.

Its subcellular location is the cytoplasm. The enzyme catalyses apo-[ACP] + CoA = holo-[ACP] + adenosine 3',5'-bisphosphate + H(+). Its function is as follows. Transfers the 4'-phosphopantetheine moiety from coenzyme A to a Ser of acyl-carrier-protein. This chain is Holo-[acyl-carrier-protein] synthase, found in Lacticaseibacillus casei (strain BL23) (Lactobacillus casei).